The chain runs to 160 residues: Eosinophil cationic protein (160 aa).

Positions 1–27 (MVPKLFTSQICLLLLLGLSGVGGSLHA) are cleaved as a signal peptide. Residues 28-72 (KPRQFTRAQWFAIQHVSLNPPQCTTAMRVINNYQRRCKDQNTFLR) form a required for nearly all of the bactericidal activities; partially involved in LPS-binding region. The active-site Proton acceptor is the H42. Cystine bridges form between C50–C110, C64–C123, C82–C138, and C89–C98. Y60 is subject to 3'-nitrotyrosine. 65–69 (KDQNT) serves as a coordination point for substrate. N-linked (GlcNAc...) asparagine glycosylation is found at N86, N92, N111, and N119. The active-site Proton donor is the H155.

The protein belongs to the pancreatic ribonuclease family. In terms of assembly, interacts with bacterial lipopolysaccharide (LPS) and lipoteichoic acid (LTA). In vitro interacts with phospholipid bilayers.

It is found in the secreted. Cytotoxin and helminthotoxin with low-efficiency ribonuclease activity. Possesses a wide variety of biological activities. Exhibits antibacterial activity. This is Eosinophil cationic protein (RNASE3) from Pongo pygmaeus (Bornean orangutan).